Here is a 1379-residue protein sequence, read N- to C-terminus: Increased rDNA silencing protein 4 homolog (1379 aa).

Disordered stretches follow at residues 1–25, 138–159, 240–314, 337–370, 534–573, 768–816, 1047–1110, and 1168–1208; these read MDAIHPVSLRNSKRHPLLHSERNLS, TSTRKRSLTVPTPRTSFPHHPR, EFDF…PLPS, SQPFKSAEPLSSAIPLPNPMSEKMRNGASKQAIM, ASKRAALSQQTESASKSSSNISEMCDSHPPSNFSISASQQ, TDLH…NDIG, DAPS…KDSQ, and AVHE…DGKY. Positions 250-259 are enriched in basic and acidic residues; the sequence is PSDKNLEKLK. A compositionally biased stretch (polar residues) spans 262 to 287; that stretch reads ASKQASESQSLKNMESLSLARSSPIL. Residues 541–555 are compositionally biased toward low complexity; it reads SQQTESASKSSSNIS. Residues 562–573 show a composition bias toward polar residues; sequence PPSNFSISASQQ. Residues 770–780 show a composition bias toward basic residues; the sequence is LHRKPRRKHKS. The span at 793-802 shows a compositional bias: acidic residues; it reads DESPQSDEVE. Residues 1240 to 1329 form the EH domain; the sequence is AANKGYLLSK…DSVWLSSKRM (90 aa). The EF-hand domain occupies 1273–1308; sequence APTSVLAKIYDLVDRHHTGVLGRDEFIVGMFLIDQY.

This sequence belongs to the IRS4 family.

Functionally, positive regulator of phosphatidylinositol 4,5-bisphosphate turnover and negatively regulates signaling through the cell integrity pathway. Involved in rDNA silencing. The sequence is that of Increased rDNA silencing protein 4 homolog from Schizosaccharomyces pombe (strain 972 / ATCC 24843) (Fission yeast).